We begin with the raw amino-acid sequence, 213 residues long: Ribosomal RNA large subunit methyltransferase E (213 aa).

Residues G68, W70, D88, D104, and D127 each contribute to the S-adenosyl-L-methionine site. The active-site Proton acceptor is K167.

The protein belongs to the class I-like SAM-binding methyltransferase superfamily. RNA methyltransferase RlmE family.

Its subcellular location is the cytoplasm. The catalysed reaction is uridine(2552) in 23S rRNA + S-adenosyl-L-methionine = 2'-O-methyluridine(2552) in 23S rRNA + S-adenosyl-L-homocysteine + H(+). Specifically methylates the uridine in position 2552 of 23S rRNA at the 2'-O position of the ribose in the fully assembled 50S ribosomal subunit. This chain is Ribosomal RNA large subunit methyltransferase E, found in Neorickettsia sennetsu (strain ATCC VR-367 / Miyayama) (Ehrlichia sennetsu).